Reading from the N-terminus, the 77-residue chain is Large ribosomal subunit protein bL28 (77 aa).

This sequence belongs to the bacterial ribosomal protein bL28 family.

The polypeptide is Large ribosomal subunit protein bL28 (Leptothrix cholodnii (strain ATCC 51168 / LMG 8142 / SP-6) (Leptothrix discophora (strain SP-6))).